The chain runs to 941 residues: MKGSNRNKDHSAEGEGVGKRPKRKCLQWHPLLAKKLLDFSEEEEEEDEEEDIDKVQLLGADGLEQDVGETEDDESPEQRARRPMNAFLLFCKRHRSLVRQEHPRLDNRGATKILADWWAVLDPKEKQKYTDMAKEYKDAFMKANPGYKWCPTTNKPVKSPTPTVNPRKKLWAFPSDSSRDLPSPKKAKTEEMPQLNFGMADPTQMGGLSMLLLAGEHALGTPEVSSGTCRPDVSESPELRQKSPLFQFAEISSSTSHSDASTKQCQTSALFQFAEISSNTSQLGGAEPVKRCGKSALFQLAEMCLASEGMKMEESKLIKAKESDGGRIKELEKGKEEKEIKMEKTDETRLQKEAEFEKSAKENLRDSKELRNFEALQIDDIMAIKMEDPKEIRKEELEEDHKCSHFPDFSYSASSKIIISDVPSRKDHMCHPHGIMIIEDPAALNKPEKLKKKKKKSKMDRHGNDKSTPKKTCKKRQSSESDIESVIYTIEAVAKGDWGIEKLGDTPRKKVRTSSSGKGSILDAKPPKKKVKSREKKMSKEKSSDTTKESRPPDFISISASKNISGETPEGIKAEPLTPMEDALPPSLSGQAKPEDSDCHRKIETCGSRKSERSCKGALYKTLVSEGMLTSLRANVDRGKRSSGKGNSSDHEGCWNEESWTFSQSGTSGSKKFKKTKPKEDCLLGSAKLDEEFEKKFNSLPQYSPVTFDRKCVPVPRKKKKTGNVSSEPTKTSKGPFQSQKKNLFHKIVSKYKHKKEKPNVPEKGSGDKWSNKQLFLDAIHPTEAIFSEDRNTMEPVHKVKNIPSIFNTPEPTTTQEPLVGSQKRKARKTKITHLVRTADGRVSPAGGTLDDKPKEQLQRSLPKATETDCNDKCSHNTEVGETRSSTPEMPAVSAFFSLAALAEVAAMENVHRGQRSTPLTHDGQPKEMPQAPVLISCADQ.

Positions 1 to 18 are enriched in basic and acidic residues; it reads MKGSNRNKDHSAEGEGVG. Disordered regions lie at residues 1-21, 39-80, 157-200, and 221-242; these read MKGSNRNKDHSAEGEGVGKRP, FSEE…EQRA, VKSP…FGMA, and TPEVSSGTCRPDVSESPELRQK. 2 stretches are compositionally biased toward acidic residues: residues 39 to 52 and 63 to 75; these read FSEEEEEEDEEEDI and LEQDVGETEDDES. The segment at residues 80–148 is a DNA-binding region (HMG box); that stretch reads ARRPMNAFLL…AFMKANPGYK (69 aa). Over residues 177–191 the composition is skewed to basic and acidic residues; it reads SSRDLPSPKKAKTEE. Phosphoserine is present on Ser-243. Residues 326–370 are a coiled coil; sequence GRIKELEKGKEEKEIKMEKTDETRLQKEAEFEKSAKENLRDSKEL. Lys-385 is covalently cross-linked (Glycyl lysine isopeptide (Lys-Gly) (interchain with G-Cter in SUMO2)). Positions 438-482 are disordered; sequence IEDPAALNKPEKLKKKKKKSKMDRHGNDKSTPKKTCKKRQSSESD. Positions 449–459 are enriched in basic residues; that stretch reads KLKKKKKKSKM. 2 positions are modified to phosphoserine: Ser-478 and Ser-485. Basic and acidic residues-rich tracts occupy residues 499–508 and 536–552; these read GIEKLGDTPR and KKMSKEKSSDTTKESRP. Disordered regions lie at residues 499–600 and 635–677; these read GIEK…SDCH and NVDR…KKTK. Residue Lys-573 forms a Glycyl lysine isopeptide (Lys-Gly) (interchain with G-Cter in SUMO2) linkage. Residues 661-670 show a composition bias toward low complexity; it reads TFSQSGTSGS. A Glycyl lysine isopeptide (Lys-Gly) (interchain with G-Cter in SUMO2) cross-link involves residue Lys-696. Ser-704 is subject to Phosphoserine. Disordered stretches follow at residues 714 to 771, 803 to 888, and 912 to 941; these read PVPR…DKWS, IPSI…SSTP, and HRGQRSTPLTHDGQPKEMPQAPVLISCADQ. A compositionally biased stretch (polar residues) spans 723 to 742; sequence GNVSSEPTKTSKGPFQSQKK. Residues 743-757 show a composition bias toward basic residues; that stretch reads NLFHKIVSKYKHKKE. The span at 758–771 shows a compositional bias: basic and acidic residues; it reads KPNVPEKGSGDKWS. Positions 805-817 are enriched in polar residues; sequence SIFNTPEPTTTQE. A Phosphoserine modification is found at Ser-822. Over residues 823 to 834 the composition is skewed to basic residues; sequence QKRKARKTKITH. Ser-844 carries the phosphoserine modification. Over residues 866–882 the composition is skewed to basic and acidic residues; it reads TETDCNDKCSHNTEVGE.

Its subcellular location is the nucleus. Functionally, transcription factor that is necessary for cell cycle progression from G1 to S phase. This Homo sapiens (Human) protein is HMG box transcription factor BBX (BBX).